The following is a 627-amino-acid chain: MPKTLHEIPRERPATPLLDRASSPAELRRLGEADLETLADELRQYLLYTVGQTGGHFGAGLGVVELTIALHYVFDTPDDRLVWDVGHQAYPHKILTERRELMGTLRQKDGLAAFPRRAESEYDTFGVGHSSTSISAALGMAIAARLQGKERKSVAVIGDGALTAGMAFEALNHASEVDADMLVILNDNDMSISHNVGGLSNYLAKILSSRTYSSMREGSKKVLSRLPGAWEIARRTEEYAKGMLVPGTLFEELGWNYIGPIDGHDLPTLVATLRNMRDMKGPQFLHVVTKKGKGFAPAELDPIGYHAITKLEAPGSAPKKTGGPKYSSVFGQWLCDMAAQDARLLGITPAMKEGSDLVAFSERYPERYFDVAIAEQHAVTLAAGMACEGMKPVVAIYSTFLQRAYDQLIHDVAVQHLDVLFAIDRAGLVGEDGPTHAGSFDISYLRCIPGMLVMTPSDEDELRKLLTTGYLFDGPAAVRYPRGSGPNHPIDPDLQPVEIGKGVVRRRGGKVALLVFGVQLAEAMKVAEGLDATVADMRFVKPLDEALVRELAGSHELLVSIEENAVMGGAGSAVGEFLAREGLEVPLLQLGLPDYYVEHAKPSEMLAECGLDAAGIEKAVRQRLDRQ.

Residues H87 and 128 to 130 (GHS) contribute to the thiamine diphosphate site. D159 provides a ligand contact to Mg(2+). Thiamine diphosphate contacts are provided by residues 160–161 (GA), N188, F295, and E375. N188 provides a ligand contact to Mg(2+).

Belongs to the transketolase family. DXPS subfamily. Homodimer. It depends on Mg(2+) as a cofactor. Thiamine diphosphate serves as cofactor.

It carries out the reaction D-glyceraldehyde 3-phosphate + pyruvate + H(+) = 1-deoxy-D-xylulose 5-phosphate + CO2. Its pathway is metabolic intermediate biosynthesis; 1-deoxy-D-xylulose 5-phosphate biosynthesis; 1-deoxy-D-xylulose 5-phosphate from D-glyceraldehyde 3-phosphate and pyruvate: step 1/1. Its function is as follows. Catalyzes the acyloin condensation reaction between C atoms 2 and 3 of pyruvate and glyceraldehyde 3-phosphate to yield 1-deoxy-D-xylulose-5-phosphate (DXP). The chain is 1-deoxy-D-xylulose-5-phosphate synthase from Pseudomonas paraeruginosa (strain DSM 24068 / PA7) (Pseudomonas aeruginosa (strain PA7)).